A 453-amino-acid chain; its full sequence is Lipase 9 (453 aa).

Residues 1 to 14 (MLYLILFLIAPIYA) form the signal peptide. N-linked (GlcNAc...) asparagine glycosylation is present at Asn-36. Cysteines 110 and 281 form a disulfide. The active-site Charge relay system is the Ser-194. N-linked (GlcNAc...) asparagine glycans are attached at residues Asn-229, Asn-266, and Asn-269. Residues Asp-343 and His-376 each act as charge relay system in the active site. Residues Cys-359 and Cys-404 are joined by a disulfide bond. Asn-417 is a glycosylation site (N-linked (GlcNAc...) asparagine).

It belongs to the AB hydrolase superfamily. Lipase family. Class Lip subfamily.

The protein resides in the secreted. It catalyses the reaction a triacylglycerol + H2O = a diacylglycerol + a fatty acid + H(+). Its function is as follows. Secreted lipase that is able to hydrolyze both the neutral triacylglycerols and the monopalmitate ester Tween 40, allowing the use of hydrolyzed products as carbon sources. Has broad lipolytic activity, which may be important for colonization and subsequent infection, therefore contributing to the persistence and virulence in human tissue. The protein is Lipase 9 of Candida albicans (strain SC5314 / ATCC MYA-2876) (Yeast).